A 472-amino-acid polypeptide reads, in one-letter code: Dihydrolipoyl dehydrogenase 2 (472 aa).

FAD-binding positions include 39-47 (ERDAYGGTC), Lys-56, and Ala-118. A disulfide bridge connects residues Cys-47 and Cys-52. Residues 186 to 190 (GAGYI), Glu-209, and 275 to 278 (AVGR) each bind NAD(+). Residues Asp-318 and Ala-326 each contribute to the FAD site. His-450 (proton acceptor) is an active-site residue.

Belongs to the class-I pyridine nucleotide-disulfide oxidoreductase family. As to quaternary structure, homodimer. The cofactor is FAD.

It is found in the cytoplasm. The catalysed reaction is N(6)-[(R)-dihydrolipoyl]-L-lysyl-[protein] + NAD(+) = N(6)-[(R)-lipoyl]-L-lysyl-[protein] + NADH + H(+). The chain is Dihydrolipoyl dehydrogenase 2 (lpdA2) from Haloarcula marismortui (strain ATCC 43049 / DSM 3752 / JCM 8966 / VKM B-1809) (Halobacterium marismortui).